Here is a 155-residue protein sequence, read N- to C-terminus: Transcriptional regulator MraZ (155 aa).

SpoVT-AbrB domains lie at 5 to 52 (TYEN…SQDR) and 81 to 124 (SMNL…EPAA).

The protein belongs to the MraZ family. In terms of assembly, forms oligomers.

It localises to the cytoplasm. The protein resides in the nucleoid. In Pelagibacter ubique (strain HTCC1062), this protein is Transcriptional regulator MraZ.